Consider the following 516-residue polypeptide: Calcitonin receptor (516 aa).

An N-terminal signal peptide occupies residues 1–24; that stretch reads MRFLLLNRFTLLLLLLVSPTPVLQ. Topologically, residues 25 to 146 are extracellular; it reads APTNLTDSGL…FTPDKLHNAY (122 aa). Residues Asn28, Asn73, Asn125, and Asn130 are each glycosylated (N-linked (GlcNAc...) asparagine). Disulfide bonds link Cys55–Cys81, Cys72–Cys112, and Cys95–Cys134. A helical transmembrane segment spans residues 147-169; that stretch reads VLYYLALVGHSMSIAALIASMGI. Over 170–181 the chain is Cytoplasmic; the sequence is FLFFKNLSCQRV. Residues 182 to 202 traverse the membrane as a helical segment; the sequence is TLHKNMFLTYILNSIIIIIHL. Residues 203 to 256 lie on the Extracellular side of the membrane; that stretch reads VEVVPNGDLVRRDPMHIFHHNTYMWTMQWELSPPLPLSAHEGKMDPHDSEVISC. The cysteines at positions 256 and 326 are disulfide-linked. The helical transmembrane segment at 257-279 threads the bilayer; that stretch reads KILHFFHQYMMACNYFWMLCEGI. Residues 280–296 lie on the Cytoplasmic side of the membrane; sequence YLHTLIVMAVFTEDQRL. A helical membrane pass occupies residues 297–317; that stretch reads RWYYLLGWGFPIVPTIIHAIT. Residues 318 to 333 are Extracellular-facing; the sequence is RAVYYNDNCWLSTETH. Residues 334-357 traverse the membrane as a helical segment; that stretch reads LLYIIHGPVMAALVVNFFFLLNIV. At 358 to 377 the chain is on the cytoplasmic side; the sequence is RVLVTKMRQTHEAEAYMYLK. A helical membrane pass occupies residues 378 to 396; it reads AVKATMVLVPLLGIQFVVF. The Extracellular portion of the chain corresponds to 397-404; it reads PWRPSNKV. A helical membrane pass occupies residues 405 to 431; sequence LGKIYDYLMHSLIHFQGFFVATIYCFC. The Cytoplasmic segment spans residues 432 to 516; the sequence is NHEVQVTLKR…MNVIQQDSSA (85 aa). Positions 489 to 516 are disordered; the sequence is RNPPVSNNEGEEGTEMIPMNVIQQDSSA.

The protein belongs to the G-protein coupled receptor 2 family. As to quaternary structure, heterodimer of CALCR and RAMP1, RAMP2 or RAMP3; the receptor complexes function as AMYR1, AMYR2 and AMYR3 receptors, respectively, and respond to amylin/IAPP, calcitonin/CT and CGRP1 ligands. Interacts with GPRASP2.

It localises to the cell membrane. Functionally, g protein-coupled receptor activated by ligand peptides amylin (IAPP), calcitonin (CT/CALCA) and calcitonin gene-related peptide type 1 (CGRP1/CALCA). CALCR interacts with receptor-activity-modifying proteins RAMP1, 2 and 3 to form receptor complexes AMYR1, 2 and 3, respectively. IAPP, CT and CGRP1 activate CALCR and AMYRs with distinct modes of receptor activation resulting in specific phenotypes. Ligand binding causes a conformation change that triggers signaling via guanine nucleotide-binding proteins (G proteins) and modulates the activity of downstream effectors. Activates cAMP-dependent pathway. The sequence is that of Calcitonin receptor from Rattus norvegicus (Rat).